Here is a 158-residue protein sequence, read N- to C-terminus: NAD(P)H-quinone oxidoreductase subunit J, chloroplastic (158 aa).

Belongs to the complex I 30 kDa subunit family. In terms of assembly, NDH is composed of at least 16 different subunits, 5 of which are encoded in the nucleus.

It is found in the plastid. Its subcellular location is the chloroplast thylakoid membrane. The enzyme catalyses a plastoquinone + NADH + (n+1) H(+)(in) = a plastoquinol + NAD(+) + n H(+)(out). It carries out the reaction a plastoquinone + NADPH + (n+1) H(+)(in) = a plastoquinol + NADP(+) + n H(+)(out). In terms of biological role, NDH shuttles electrons from NAD(P)H:plastoquinone, via FMN and iron-sulfur (Fe-S) centers, to quinones in the photosynthetic chain and possibly in a chloroplast respiratory chain. The immediate electron acceptor for the enzyme in this species is believed to be plastoquinone. Couples the redox reaction to proton translocation, and thus conserves the redox energy in a proton gradient. The protein is NAD(P)H-quinone oxidoreductase subunit J, chloroplastic of Amborella trichopoda.